Reading from the N-terminus, the 139-residue chain is D-ribose pyranase (139 aa).

His-20 serves as the catalytic Proton donor. Substrate-binding positions include Asp-28, His-106, and Tyr-128–Asn-130.

It belongs to the RbsD / FucU family. RbsD subfamily. Homodecamer.

It localises to the cytoplasm. It catalyses the reaction beta-D-ribopyranose = beta-D-ribofuranose. The protein operates within carbohydrate metabolism; D-ribose degradation; D-ribose 5-phosphate from beta-D-ribopyranose: step 1/2. Functionally, catalyzes the interconversion of beta-pyran and beta-furan forms of D-ribose. The sequence is that of D-ribose pyranase from Actinobacillus pleuropneumoniae serotype 7 (strain AP76).